The primary structure comprises 195 residues: Pyruvoyl-dependent arginine decarboxylase AaxB (195 aa).

Serine 53 bears the Pyruvic acid (Ser) mark.

The protein belongs to the pyruvoyl-dependent arginine decarboxylase family. As to quaternary structure, trimer of an alpha-beta dimer. It depends on pyruvate as a cofactor.

It localises to the cytoplasm. It catalyses the reaction L-arginine + H(+) = agmatine + CO2. Part of the AaxABC system, catalyzes the decarboxylation of L-arginine. The arginine uptake by the bacterium in the macrophage may be a virulence factor against the host innate immune response. This Chlamydia abortus (strain DSM 27085 / S26/3) (Chlamydophila abortus) protein is Pyruvoyl-dependent arginine decarboxylase AaxB (aaxB).